The primary structure comprises 323 residues: tRNA U34 carboxymethyltransferase (323 aa).

Carboxy-S-adenosyl-L-methionine contacts are provided by residues lysine 91, tryptophan 105, lysine 110, glycine 130, 152 to 154, 181 to 182, methionine 196, tyrosine 200, and arginine 315; these read DPT and IE.

This sequence belongs to the class I-like SAM-binding methyltransferase superfamily. CmoB family. In terms of assembly, homotetramer.

It carries out the reaction carboxy-S-adenosyl-L-methionine + 5-hydroxyuridine(34) in tRNA = 5-carboxymethoxyuridine(34) in tRNA + S-adenosyl-L-homocysteine + H(+). Functionally, catalyzes carboxymethyl transfer from carboxy-S-adenosyl-L-methionine (Cx-SAM) to 5-hydroxyuridine (ho5U) to form 5-carboxymethoxyuridine (cmo5U) at position 34 in tRNAs. The protein is tRNA U34 carboxymethyltransferase of Salmonella typhimurium (strain LT2 / SGSC1412 / ATCC 700720).